The sequence spans 856 residues: MGNRGMEDLIPLVNRLQDAFSAIGQNADLDLPQIAVVGGQSAGKSSVLENFVGRDFLPRGSGIVTRRPLVLQLVNATTEYAEFLHCKGKKFTDFEEVRLEIEAETDRVTGTNKGISPVPINLRVYSPHVLNLTLVDLPGMTKVPVGDQPPDIEFQIRDMLMQFVTKENCLILAVSPANSDLANSDALKVAKEVDPQGQRTIGVITKLDLMDEGTDARDVLENKLLPLRRGYIGVVNRSQKDIDGKKDITAALAAERKFFLSHPSYRHLADRMGTPYLQKVLNQQLTNHIRDTLPGLRNKLQSQLLSIEKEVEEYKNFRPDDPARKTKALLQMVQQFAVDFEKRIEGSGDQIDTYELSGGARINRIFHERFPFELVKMEFDEKELRREISYAIKNIHGIRTGLFTPDLAFEATVKKQVQKLKEPSIKCVDMVVSELTATIRKCSEKLQQYPRLREEMERIVTTHIREREGRTKEQVMLLIDIELAYMNTNHEDFIGFANAQQRSNQMNKKKASGNQDEILVIRKGWLTINNIGIMKGGSKEYWFVLTAENLSWYKDDEEKEKKYMLSVDNLKLRDVEKGFMSSKHIFALFNTEQRNVYKDYRQLELACETQEEVDSWKASFLRAGVYPERVGDKEKASETEENGSDSFMHSMDPQLERQVETIRNLVDSYMAIVNKTVRDLMPKTIMHLMINNTKEFIFSELLANLYSCGDQNTLMEESAEQAQRRDEMLRMYHALKEALSIIGDINTTTVSTPMPPPVDDSWLQVQSVPTGRRSPTSSPTPQRRAPAVPPARPGSRGPAPGPPPAGSALGGAPPVPSRPGASPDPFGPPPQVPSRPNRAPPGVPSQPIGSGKSIPS.

In terms of domain architecture, Dynamin-type G spans 28–294; that stretch reads DLDLPQIAVV…LTNHIRDTLP (267 aa). A G1 motif region spans residues 38–45; the sequence is GGQSAGKS. GDP-binding residues include Ser-41, Gly-43, Lys-44, Ser-45, Ser-46, Arg-59, and Gly-60. The tract at residues 64–66 is G2 motif; it reads VTR. Tyr-80 is modified (phosphotyrosine). Position 125 is a 3'-nitrotyrosine; alternate (Tyr-125). Tyr-125 bears the Phosphotyrosine; alternate mark. Positions 136-139 are G3 motif; it reads DLPG. Positions 205–208 are G4 motif; it reads TKLD. 6 residues coordinate GDP: Lys-206, Asp-208, Asp-211, Asn-236, Arg-237, and Gln-239. The segment at 235 to 238 is G5 motif; the sequence is VNRS. Phosphoserine is present on residues Ser-306 and Ser-347. Tyr-354 is subject to Phosphotyrosine. Ser-512 is modified (phosphoserine). In terms of domain architecture, PH spans 519–625; the sequence is LVIRKGWLTI…WKASFLRAGV (107 aa). A GED domain is found at 659–750; sequence VETIRNLVDS…IIGDINTTTV (92 aa). Positions 750-856 are disordered; it reads VSTPMPPPVD…PIGSGKSIPS (107 aa). Polar residues predominate over residues 763-781; it reads LQVQSVPTGRRSPTSSPTP. A phosphoserine mark is found at Ser-774 and Ser-778. Arg-796 is modified (omega-N-methylarginine). Ser-822 carries the phosphoserine modification. The span at 825–844 shows a compositional bias: pro residues; it reads PFGPPPQVPSRPNRAPPGVP.

The protein belongs to the TRAFAC class dynamin-like GTPase superfamily. Dynamin/Fzo/YdjA family. Homodimer; homodimerization is mediated by the dynamin-type G domain which promotes assembly-stimulated GTPase activity. Homo-tetramer formed from two dimers in the absence of lipid. Oligomerizes into a helical polymer that self-assembles around the vesicle membrane, when associated to the menbrane through lipid binding. Interacts (via C-terminal proline-rich domain (PRD)) with SNX9 (via SH3 domain); this interaction allows regulation of DNM1 self-assembly during late stages of endocytic vesicle formation and supports DNM1's early functions in accelerating clathrin-coated pits (CCPs) maturation in non neuronals cell. Interacts (via C-terminal proline-rich domain (PRD)) with MYO1E (via SH3 domain); this interaction regulates receptor-mediated endocytosis. Interacts with SNX33 (via SH3 domain); this interaction decreases DNM1-dependent endocytosis. Interacts with DIAPH1. Interacts with GRB2 (via SH3 domain); this interaction mediates disassembly of DNM1 polymers, therefore modulates self-assembly. Forms a complex with BIN1 (via SH3 domain) and SH3GL2 (via SH3 domain). Forms a complex with SH3GL2 (via SH3 domain) and AMPH (via SH3 domain). Forms a complex with SH3GL2 (via SH3 domain) and SYNJ1. Interacts with AMPH. Interacts (via C-terminal proline-rich domain (PRD)) with SYT1; this interaction facilitates vesicle fission during clathrin-mediated endocytosis (CME). Interacts (via C-terminal proline-rich domain (PRD)) with PLCG1 (via SH3 domain); this interaction stimulates the release of GDP from DNM1 and enhances DNM1-dependent endocytosis. Interacts with SNPH; this interaction inhibits the binding of DNM1 to AMPH and DNM1-receptor-mediated endocytosis. Interacts with CAV1. Interacts with SH3GLB1 (via SH3 domain). Interacts with PACSIN1 (via SH3 domain), PACSIN2 (via SH3 domain) and PACSIN3 (via SH3 domain). Interacts with UNC119; this interaction decreases DNM1's GTPase activity and affects DNM1's interaction with AMPH. Interacts with AMPH. Interacts (GTP-bound form) with DNAJC6; this interaction allows clathrin-coated vesicle (CCV) formation at the plasma membrane. Phosphorylation at Ser-774 by GSK3B/GSK3-beta leads to inactivation of receptor-mediated endocytosis in non-neuronal cells. Dephosphorylation at Ser-774, through the EGFR downstream signaling, leads to activation and regulates early stages of clathrin-mediated endocytosis (CME).

It is found in the cell membrane. The protein resides in the membrane. It localises to the clathrin-coated pit. The protein localises to the cytoplasmic vesicle. Its subcellular location is the presynapse. It is found in the secretory vesicle. The protein resides in the chromaffin granule. It carries out the reaction GTP + H2O = GDP + phosphate + H(+). In terms of biological role, catalyzes the hydrolysis of GTP and utilizes this energy to mediate vesicle scission and participates in many forms of endocytosis, such as clathrin-mediated endocytosis or synaptic vesicle endocytosis as well as rapid endocytosis (RE). Associates to the membrane, through lipid binding, and self-assembles into rings and stacks of interconnected rings through oligomerization to form a helical polymer around the vesicle membrane leading to constriction of invaginated coated pits around their necks. Self-assembly of the helical polymer induces membrane tubules narrowing until the polymer reaches a length sufficient to trigger GTP hydrolysis. Depending on the curvature imposed on the tubules, membrane detachment from the helical polymer upon GTP hydrolysis can cause spontaneous hemifission followed by complete fission. May play a role in regulating early stages of clathrin-mediated endocytosis in non-neuronal cells through its activation by dephosphorylation via the signaling downstream of EGFR. Controls vesicle size at a step before fission, during formation of membrane pits, at hippocampal synapses. Controls plastic adaptation of the synaptic vesicle recycling machinery to high levels of activity. Mediates rapid endocytosis (RE), a Ca(2+)-dependent and clathrin- and K(+)-independent process in chromaffin cells. Microtubule-associated force-producing protein involved in producing microtubule bundles and able to bind and hydrolyze GTP. Through its interaction with DNAJC6, acts during the early steps of clathrin-coated vesicle (CCV) formation. The sequence is that of Dynamin-1 from Bos taurus (Bovine).